The primary structure comprises 311 residues: Ribonuclease HIII (311 aa).

The region spanning 95-311 (MSIVGSDEVG…NTEKAFRLLK (217 aa)) is the RNase H type-2 domain. Residues aspartate 101, glutamate 102, and aspartate 206 each coordinate a divalent metal cation.

Belongs to the RNase HII family. RnhC subfamily. Mn(2+) is required as a cofactor. The cofactor is Mg(2+).

It is found in the cytoplasm. It carries out the reaction Endonucleolytic cleavage to 5'-phosphomonoester.. Functionally, endonuclease that specifically degrades the RNA of RNA-DNA hybrids. This Bacillus cereus (strain ATCC 10987 / NRS 248) protein is Ribonuclease HIII.